A 402-amino-acid chain; its full sequence is Diaminopimelate decarboxylase (402 aa).

K45 bears the N6-(pyridoxal phosphate)lysine mark. Residues G224 and 259–262 (EPGR) each bind pyridoxal 5'-phosphate. Substrate is bound by residues R262, R298, and Y302. C327 serves as the catalytic Proton donor. Substrate contacts are provided by E328 and Y356. Y356 is a pyridoxal 5'-phosphate binding site.

Belongs to the Orn/Lys/Arg decarboxylase class-II family. LysA subfamily. In terms of assembly, homodimer. Pyridoxal 5'-phosphate serves as cofactor.

The enzyme catalyses meso-2,6-diaminopimelate + H(+) = L-lysine + CO2. It participates in amino-acid biosynthesis; L-lysine biosynthesis via DAP pathway; L-lysine from DL-2,6-diaminopimelate: step 1/1. In terms of biological role, specifically catalyzes the decarboxylation of meso-diaminopimelate (meso-DAP) to L-lysine. The sequence is that of Diaminopimelate decarboxylase from Campylobacter jejuni subsp. jejuni serotype O:2 (strain ATCC 700819 / NCTC 11168).